The sequence spans 457 residues: tRNA-2-methylthio-N(6)-dimethylallyladenosine synthase (457 aa).

The MTTase N-terminal domain maps to 8–123 (KKVFIKTFGC…LPEMLARRDA (116 aa)). 6 residues coordinate [4Fe-4S] cluster: C17, C54, C86, C160, C164, and C167. Residues 146–379 (RVDGATAFVS…QEAIEANGRR (234 aa)) form the Radical SAM core domain. The 68-residue stretch at 382-449 (QSRVGTVQRI…PHSLRGEVLL (68 aa)) folds into the TRAM domain.

Belongs to the methylthiotransferase family. MiaB subfamily. Monomer. The cofactor is [4Fe-4S] cluster.

The protein localises to the cytoplasm. The enzyme catalyses N(6)-dimethylallyladenosine(37) in tRNA + (sulfur carrier)-SH + AH2 + 2 S-adenosyl-L-methionine = 2-methylsulfanyl-N(6)-dimethylallyladenosine(37) in tRNA + (sulfur carrier)-H + 5'-deoxyadenosine + L-methionine + A + S-adenosyl-L-homocysteine + 2 H(+). In terms of biological role, catalyzes the methylthiolation of N6-(dimethylallyl)adenosine (i(6)A), leading to the formation of 2-methylthio-N6-(dimethylallyl)adenosine (ms(2)i(6)A) at position 37 in tRNAs that read codons beginning with uridine. The polypeptide is tRNA-2-methylthio-N(6)-dimethylallyladenosine synthase (Methylibium petroleiphilum (strain ATCC BAA-1232 / LMG 22953 / PM1)).